The sequence spans 358 residues: DnaJ homolog subfamily B member 11 (358 aa).

The signal sequence occupies residues 1–22 (MAPQNLGTFCLLLLYLIGTVIA). Residues 25 to 90 (DFYKILGVPR…EKRKQYDTYG (66 aa)) enclose the J domain. Residue Thr-188 is modified to Phosphothreonine. N-linked (GlcNAc...) asparagine glycosylation is present at Asn-261.

In terms of assembly, part of a large chaperone multiprotein complex comprising DNAJB11, HSP90B1, HSPA5, HYOU, PDIA2, PDIA4, PDIA6, PPIB, SDF2L1, UGGT1 and very small amounts of ERP29, but not, or at very low levels, CALR nor CANX. Binds to denatured substrates in an ATP-independent manner. Interacts via the J domain with HSPA5 in an ATP-dependent manner. Post-translationally, contains high-mannose Endo H-sensitive carbohydrates. Cys-169, Cys-171, Cys-193 and Cys-196 form intramolecular disulfide bonds. The preferential partner for each Cys is not known.

It localises to the endoplasmic reticulum lumen. Its function is as follows. As a co-chaperone for HSPA5 it is required for proper folding, trafficking or degradation of proteins. Binds directly to both unfolded proteins that are substrates for ERAD and nascent unfolded peptide chains, but dissociates from the HSPA5-unfolded protein complex before folding is completed. May help recruiting HSPA5 and other chaperones to the substrate. Stimulates HSPA5 ATPase activity. It is necessary for maturation and correct trafficking of PKD1. The polypeptide is DnaJ homolog subfamily B member 11 (DNAJB11) (Bos taurus (Bovine)).